A 269-amino-acid chain; its full sequence is Tryptophan synthase alpha chain (269 aa).

Catalysis depends on proton acceptor residues Glu-49 and Asp-60.

It belongs to the TrpA family. Tetramer of two alpha and two beta chains.

The enzyme catalyses (1S,2R)-1-C-(indol-3-yl)glycerol 3-phosphate + L-serine = D-glyceraldehyde 3-phosphate + L-tryptophan + H2O. It functions in the pathway amino-acid biosynthesis; L-tryptophan biosynthesis; L-tryptophan from chorismate: step 5/5. The alpha subunit is responsible for the aldol cleavage of indoleglycerol phosphate to indole and glyceraldehyde 3-phosphate. In Buchnera aphidicola subsp. Acyrthosiphon pisum (strain APS) (Acyrthosiphon pisum symbiotic bacterium), this protein is Tryptophan synthase alpha chain.